The chain runs to 246 residues: MGDREQLLQRARLAEQAERYDDMASAMKAVTELNEPLSNEDRNLLSVAYKNVVGARRSSWRVISSIEQKTMADGNEKKLEKVKAYREKIEKELETVCNDVLALLDKFLIKNCNDFQYESKVFYLKMKGDYYRYLAEVASGEKKNSVVEASEAAYKEAFEISKEHMQPTHPIRLGLALNFSVFYYEIQNAPEQACLLAKQAFDDAIAELDTLNEDSYKDSTLIMQLLRDNLTLWTSDQQDEEAGEGN.

Position 2 is an N-acetylglycine (Gly-2). Ser-25 and Ser-59 each carry phosphoserine.

Belongs to the 14-3-3 family. As to quaternary structure, homodimer. Interacts with many nuclear hormone receptors and cofactors including AR, ESR1, ESR2, MC2R, NR3C1, NRIP1, PPARBP and THRA. Interacts with ABL1 (phosphorylated form); the interaction retains it in the cytoplasm. Weakly interacts with CDKN1B. Interacts with ARHGEF28 and CDK16. Interacts with GAB2. Interacts with KCNK18 in a phosphorylation-dependent manner. Interacts with SAMSN1. Interacts with the 'Ser-241' phosphorylated form of PDPK1. Interacts with the 'Thr-369' phosphorylated form of DAPK2. Interacts with PI4KB, TBC1D22A and TBC1D22B. Interacts with SLITRK1. Interacts with MEFV. Phosphorylated on Ser-59 by protein kinase C delta type catalytic subunit in a sphingosine-dependent fashion.

The protein localises to the cytoplasm. Functionally, adapter protein implicated in the regulation of a large spectrum of both general and specialized signaling pathways. Binds to a large number of partners, usually by recognition of a phosphoserine or phosphothreonine motif. Binding generally results in the modulation of the activity of the binding partner. Negatively regulates the kinase activity of PDPK1. The sequence is that of 14-3-3 protein eta (YWHAH) from Bos taurus (Bovine).